The sequence spans 274 residues: Large ribosomal subunit protein uL2 (274 aa).

2 disordered regions span residues 28–53 (APYAPLLEKNSKSGGRNNNGRITVRH) and 223–274 (VAMN…RRNK). Positions 39 to 48 (KSGGRNNNGR) are enriched in low complexity.

This sequence belongs to the universal ribosomal protein uL2 family. Part of the 50S ribosomal subunit. Forms a bridge to the 30S subunit in the 70S ribosome.

In terms of biological role, one of the primary rRNA binding proteins. Required for association of the 30S and 50S subunits to form the 70S ribosome, for tRNA binding and peptide bond formation. It has been suggested to have peptidyltransferase activity; this is somewhat controversial. Makes several contacts with the 16S rRNA in the 70S ribosome. This is Large ribosomal subunit protein uL2 from Pseudoalteromonas atlantica (strain T6c / ATCC BAA-1087).